Consider the following 199-residue polypeptide: Molybdenum cofactor guanylyltransferase (199 aa).

Residues 12-14 (LAG), K25, N53, D71, and D101 contribute to the GTP site. D101 serves as a coordination point for Mg(2+).

It belongs to the MobA family. In terms of assembly, monomer. The cofactor is Mg(2+).

The protein localises to the cytoplasm. The catalysed reaction is Mo-molybdopterin + GTP + H(+) = Mo-molybdopterin guanine dinucleotide + diphosphate. Its function is as follows. Transfers a GMP moiety from GTP to Mo-molybdopterin (Mo-MPT) cofactor (Moco or molybdenum cofactor) to form Mo-molybdopterin guanine dinucleotide (Mo-MGD) cofactor. The protein is Molybdenum cofactor guanylyltransferase of Cupriavidus taiwanensis (strain DSM 17343 / BCRC 17206 / CCUG 44338 / CIP 107171 / LMG 19424 / R1) (Ralstonia taiwanensis (strain LMG 19424)).